A 72-amino-acid chain; its full sequence is Keratin-associated protein 19-5 (72 aa).

This sequence belongs to the KRTAP type 19 family. Interacts with hair keratins.

Its function is as follows. In the hair cortex, hair keratin intermediate filaments are embedded in an interfilamentous matrix, consisting of hair keratin-associated proteins (KRTAP), which are essential for the formation of a rigid and resistant hair shaft through their extensive disulfide bond cross-linking with abundant cysteine residues of hair keratins. The matrix proteins include the high-sulfur and high-glycine-tyrosine keratins. This chain is Keratin-associated protein 19-5 (KRTAP19-5), found in Homo sapiens (Human).